Here is a 580-residue protein sequence, read N- to C-terminus: Negative elongation factor B (580 aa).

An N6-acetyllysine modification is found at Lys-519. The tract at residues Asp-552–Leu-580 is disordered. Ser-557 bears the Phosphoserine mark.

It belongs to the NELF-B family. The NELF complex is composed of NELFA, NELFB, NELFCD and NELFE; the N-terminus of NELFB binds to the NELFA:NELFCD subcomplex. Binds RNA which may help to stabilize the NELF complex on nucleic acid Interacts with the first BRCT repeat of BRCA1. Interacts with KIAA1191. Isoform 1 and isoform 2 interact with NELFA, NELFCD and NELFE. In terms of tissue distribution, isoform 1 is expressed in the kidney, liver, adipose and lung. Isoform 2 is widely expressed.

The protein resides in the nucleus. Its function is as follows. Essential component of the NELF complex, a complex that negatively regulates the elongation of transcription by RNA polymerase II (Pol II). The NELF complex, which acts via an association with the DSIF complex and causes transcriptional pausing, is counteracted by the P-TEFb kinase complex. May be able to induce chromatin unfolding. Essential for early embryogenesis; plays an important role in maintaining the undifferentiated state of embryonic stem cells (ESCs) by preventing unscheduled expression of developmental genes. Plays a key role in establishing the responsiveness of stem cells to developmental cues; facilitates plasticity and cell fate commitment in ESCs by establishing the appropriate expression level of signaling molecules. Supports the transcription of genes involved in energy metabolism in cardiomyocytes; facilitates the association of transcription initiation factors with the promoters of the metabolism-related genes. This is Negative elongation factor B (Nelfb) from Mus musculus (Mouse).